Reading from the N-terminus, the 79-residue chain is Sulfur carrier protein TusA (79 aa).

C17 functions as the Cysteine persulfide intermediate in the catalytic mechanism.

Belongs to the sulfur carrier protein TusA family.

The protein resides in the cytoplasm. In terms of biological role, sulfur carrier protein which probably makes part of a sulfur-relay system. The chain is Sulfur carrier protein TusA from Actinobacillus pleuropneumoniae serotype 5b (strain L20).